The primary structure comprises 359 residues: PWWP domain-containing protein 1 (359 aa).

The interval 1–37 (MNNARTNAKRRRLSSKQGGLSISEGKESNIPSVVEES) is disordered. A PWWP domain is found at 52–114 (FGDRILVKAP…RNSVKPLLDS (63 aa)). Disordered regions lie at residues 133-161 (AYEASKTPPDLKEESSTDEEMDSLSAAEE) and 204-255 (VAST…SPLN). The span at 204–224 (VASTSRSSTQLSDQRYPLSSN) shows a compositional bias: polar residues. Ser-252 carries the phosphoserine modification.

In terms of assembly, interacts with set9 and histone H4K20me1. Associates with nucleosomes.

The protein resides in the nucleus. Necessary for DNA damage checkpoint activation. Required for the association of set9 with chromatin and subsequent methylation of H4K20. Associates with H4K20me1 to increase the concentration of set9 on chromatin to perform H4K20me3. H4K20me3 is mainly enriched at heterochromatin and is required for proper heterochromatin assembly. The sequence is that of PWWP domain-containing protein 1 (pdp1) from Schizosaccharomyces pombe (strain 972 / ATCC 24843) (Fission yeast).